We begin with the raw amino-acid sequence, 451 residues long: UDP-glucosyltransferase 74AE2 (451 aa).

Histidine 17 serves as the catalytic Proton acceptor. An anthocyanidin is bound at residue histidine 17. The active-site Charge relay is the aspartate 108. 9 residues coordinate UDP-alpha-D-glucose: threonine 130, glutamine 330, histidine 345, tryptophan 348, asparagine 349, serine 350, glutamate 353, aspartate 369, and glutamine 370.

Belongs to the UDP-glycosyltransferase family. As to expression, expressed at higher levels in roots than in leaves.

It catalyses the reaction (20S)-ginsenoside C-K + UDP-alpha-D-glucose = (20S)-ginsenoside F2 + UDP + H(+). The enzyme catalyses (20S)-protopanaxadiol + UDP-alpha-D-glucose = (20S)-ginsenoside Rh2 + UDP + H(+). It functions in the pathway secondary metabolite biosynthesis; terpenoid biosynthesis. Component of the dammarane-type triterpene saponins (e.g. PPD-type ginsenosides or panaxosides) biosynthetic pathway. Glycosyltransferase that catalyzes the biosynthesis of ginsenoside Rh2 from protopanaxadiol (PPD) and the conversion of compound K to ginsenoside F2. The sequence is that of UDP-glucosyltransferase 74AE2 from Panax ginseng (Korean ginseng).